The following is a 227-amino-acid chain: Venom allergen 5 (227 aa).

The first 21 residues, 1–21 (MKISCLICLVIVLTIIHLSQA), serve as a signal peptide directing secretion. Disulfide bonds link C25-C37, C29-C125, C49-C117, and C193-C210. The SCP domain occupies 69-212 (EEHNRFRQKV…MQIHYLICNY (144 aa)).

Belongs to the CRISP family. Venom allergen 5-like subfamily. Expressed by the venom gland.

The protein localises to the secreted. The protein is Venom allergen 5 of Polistes dominula (European paper wasp).